The primary structure comprises 545 residues: CTP synthase (545 aa).

Residues Met1 to Leu266 are amidoligase domain. Ser14 is a CTP binding site. Ser14 is a UTP binding site. Residues Ser15–Ile20 and Asp72 contribute to the ATP site. The Mg(2+) site is built by Asp72 and Glu140. CTP-binding positions include Asp147–Glu149, Lys187–Gln192, and Lys223. UTP is bound by residues Lys187–Gln192 and Lys223. An ATP-binding site is contributed by Arg239–Val241. In terms of domain architecture, Glutamine amidotransferase type-1 spans Ile291–Gly542. An L-glutamine-binding site is contributed by Gly352. Cys379 acts as the Nucleophile; for glutamine hydrolysis in catalysis. L-glutamine-binding positions include Leu380 to Gln383, Glu403, and Arg470. Active-site residues include His515 and Glu517.

It belongs to the CTP synthase family. In terms of assembly, homotetramer.

The enzyme catalyses UTP + L-glutamine + ATP + H2O = CTP + L-glutamate + ADP + phosphate + 2 H(+). The catalysed reaction is L-glutamine + H2O = L-glutamate + NH4(+). It catalyses the reaction UTP + NH4(+) + ATP = CTP + ADP + phosphate + 2 H(+). Its pathway is pyrimidine metabolism; CTP biosynthesis via de novo pathway; CTP from UDP: step 2/2. With respect to regulation, allosterically activated by GTP, when glutamine is the substrate; GTP has no effect on the reaction when ammonia is the substrate. The allosteric effector GTP functions by stabilizing the protein conformation that binds the tetrahedral intermediate(s) formed during glutamine hydrolysis. Inhibited by the product CTP, via allosteric rather than competitive inhibition. Functionally, catalyzes the ATP-dependent amination of UTP to CTP with either L-glutamine or ammonia as the source of nitrogen. Regulates intracellular CTP levels through interactions with the four ribonucleotide triphosphates. In Psychromonas ingrahamii (strain DSM 17664 / CCUG 51855 / 37), this protein is CTP synthase.